Reading from the N-terminus, the 106-residue chain is Small membrane A-kinase anchor protein (106 aa).

A lipid anchor (N-myristoyl glycine) is attached at Gly-2. The S-palmitoyl cysteine moiety is linked to residue Cys-3. A Phosphoserine modification is found at Ser-40. Positions 62-85 (ALILEFADRLASEIVEDALQQWAC) are PKA-RI-binding. Position 98 is a phosphoserine (Ser-98).

It belongs to the small membrane AKAP family. Interacts with PKA type I regulatory subunits PRKAR1A and PRKAR1B. Also binds to type II regulatory subunits, but at a tenfold lower affinity. May be palmitoylated at Cys-3. Widely expressed, with very low levels in spleen and liver.

It localises to the cell membrane. In terms of biological role, binds to type I regulatory subunits of protein kinase A (PKA-RI) and may anchor/target them to the plasma membrane. In Mus musculus (Mouse), this protein is Small membrane A-kinase anchor protein.